Consider the following 289-residue polypeptide: ATP phosphoribosyltransferase (289 aa).

Belongs to the ATP phosphoribosyltransferase family. Long subfamily. It depends on Mg(2+) as a cofactor.

The protein resides in the cytoplasm. It catalyses the reaction 1-(5-phospho-beta-D-ribosyl)-ATP + diphosphate = 5-phospho-alpha-D-ribose 1-diphosphate + ATP. The protein operates within amino-acid biosynthesis; L-histidine biosynthesis; L-histidine from 5-phospho-alpha-D-ribose 1-diphosphate: step 1/9. Its activity is regulated as follows. Feedback inhibited by histidine. Its function is as follows. Catalyzes the condensation of ATP and 5-phosphoribose 1-diphosphate to form N'-(5'-phosphoribosyl)-ATP (PR-ATP). Has a crucial role in the pathway because the rate of histidine biosynthesis seems to be controlled primarily by regulation of HisG enzymatic activity. This chain is ATP phosphoribosyltransferase, found in Pelotomaculum thermopropionicum (strain DSM 13744 / JCM 10971 / SI).